The primary structure comprises 478 residues: Hepatitis A virus cellular receptor 1 (478 aa).

A signal peptide spans 1–24; it reads MADPIMHLQVVILSLILHLADSVA. Positions 25 to 126 constitute an Ig-like V-type domain; that stretch reads DSVNVDGVAG…WFNDMKITIS (102 aa). Topologically, residues 25 to 397 are extracellular; sequence DSVNVDGVAG…SPQMVNTTEG (373 aa). 3 disulfide bridges follow: C41–C110, C51–C62, and C57–C109. 2 N-linked (GlcNAc...) asparagine glycosylation sites follow: N70 and N87. 28 tandem repeats follow at residues 148 to 155, 156 to 161, 162 to 167, 168 to 173, 174 to 179, 180 to 185, 186 to 191, 192 to 197, 198 to 201, 202 to 207, 208 to 211, 212 to 217, 218 to 221, 222 to 227, 228 to 233, 234 to 239, 240 to 245, 246 to 251, 252 to 257, 258 to 263, 264 to 268, 269 to 273, 274 to 279, 280 to 285, 286 to 291, 292 to 297, 298 to 303, and 304 to 309. Residues 148–309 are 28 X 6 AA approximate tandem repeats of L-P-[MT]-T-[MT]-T; it reads VPTTTTTTLP…TTTTLPTTTM (162 aa). Residues 187–303 form a disordered region; that stretch reads PTTTTVPMTT…TTTTLPTTTT (117 aa). 2 disordered regions span residues 320–339 and 344–370; these read PMQDHEPVATSPSSAQPAET and LLGATRTQPTSSPLYSYTTDGSDTVTE. Polar residues predominate over residues 348–370; that stretch reads TRTQPTSSPLYSYTTDGSDTVTE. N-linked (GlcNAc...) asparagine glycosylation is found at N379 and N393. Residues 398 to 418 traverse the membrane as a helical segment; sequence IYAGVCISVLVLLAVLGVVIA. Residues 419 to 478 lie on the Cytoplasmic side of the membrane; it reads KKYFFKKEIQQLSVSFSNHQFKTLQNAVKKEVHAEDNIYIENNLYAMNQDPVVLFESLRP.

The protein belongs to the immunoglobulin superfamily. TIM family. In terms of assembly, interacts with STAM. Interacts with SELPLG.

It is found in the cell membrane. Its function is as follows. Phosphatidylserine receptor that plays an important functional role in regulatory B-cells homeostasis including generation, expansion and suppressor functions. As P-selectin/SELPLG ligand, plays a specialized role in activated but not naive T-cell trafficking during inflammatory responses. Controls thereby T-cell accumulation in the inflamed central nervous system (CNS) and the induction of autoimmune disease. Also regulates expression of various anti-inflammatory cytokines and co-inhibitory ligands including IL10. Acts as a regulator of T-cell proliferation. May play a role in kidney injury and repair. In Chlorocebus aethiops (Green monkey), this protein is Hepatitis A virus cellular receptor 1 (HAVCR1).